A 362-amino-acid chain; its full sequence is Methionine import ATP-binding protein MetN (362 aa).

The ABC transporter domain maps to V23 to L258. G55–S62 contacts ATP.

This sequence belongs to the ABC transporter superfamily. Methionine importer (TC 3.A.1.24) family. The complex is composed of two ATP-binding proteins (MetN), two transmembrane proteins (MetI) and a solute-binding protein (MetQ).

The protein localises to the cell inner membrane. The enzyme catalyses L-methionine(out) + ATP + H2O = L-methionine(in) + ADP + phosphate + H(+). The catalysed reaction is D-methionine(out) + ATP + H2O = D-methionine(in) + ADP + phosphate + H(+). In terms of biological role, part of the ABC transporter complex MetNIQ involved in methionine import. Responsible for energy coupling to the transport system. This is Methionine import ATP-binding protein MetN from Rhizobium johnstonii (strain DSM 114642 / LMG 32736 / 3841) (Rhizobium leguminosarum bv. viciae).